The chain runs to 122 residues: Large ribosomal subunit protein uL14 (122 aa).

The protein belongs to the universal ribosomal protein uL14 family. As to quaternary structure, part of the 50S ribosomal subunit. Forms a cluster with proteins L3 and L19. In the 70S ribosome, L14 and L19 interact and together make contacts with the 16S rRNA in bridges B5 and B8.

Functionally, binds to 23S rRNA. Forms part of two intersubunit bridges in the 70S ribosome. In Borreliella burgdorferi (strain ZS7) (Borrelia burgdorferi), this protein is Large ribosomal subunit protein uL14.